The sequence spans 187 residues: Adenylate kinase 1 (187 aa).

Gly-14–Thr-19 contacts ATP. The NMP stretch occupies residues Ser-34 to Val-63. AMP contacts are provided by residues Thr-35, Arg-40, Glu-61–Val-63, Gly-89–Arg-92, and Gln-96. Residues Ala-130–Asp-136 form an LID region. Arg-131 is a binding site for ATP. AMP contacts are provided by Arg-133 and Arg-144. Gln-172 is a binding site for ATP.

Belongs to the adenylate kinase family. As to quaternary structure, monomer.

Its subcellular location is the cytoplasm. It carries out the reaction AMP + ATP = 2 ADP. It participates in purine metabolism; AMP biosynthesis via salvage pathway; AMP from ADP: step 1/1. Functionally, catalyzes the reversible transfer of the terminal phosphate group between ATP and AMP. Plays an important role in cellular energy homeostasis and in adenine nucleotide metabolism. The chain is Adenylate kinase 1 from Synechocystis sp. (strain ATCC 27184 / PCC 6803 / Kazusa).